A 514-amino-acid chain; its full sequence is Cytochrome P450 monooxygenase verB (514 aa).

Residues 5–25 (WLSASVLITAVILLVDYLNYY) form a helical membrane-spanning segment. Cysteine 457 contacts heme.

Belongs to the cytochrome P450 family. The cofactor is heme.

It localises to the membrane. It participates in mycotoxin biosynthesis. In terms of biological role, cytochrome P450 monooxygenase; part of the gene cluster that mediates the biosynthesis of 11'-deoxyverticillin A, one of the dimeric epipolythiodioxopiperazines (ETPs) from the verticillin family that act as mycotoxins. 11'-deoxyverticillin A is required for normal conidiation. The nonribosomal peptide synthetase verP is speculated to be responsible for condensation of amino acids to form the carbon skeleton of verticillin, whereas the cluster-specific tailoring enzymes are involved in further modifications leading to the production of 11'-deoxyverticillin A. The polypeptide is Cytochrome P450 monooxygenase verB (Clonostachys rogersoniana).